The chain runs to 157 residues: UPF0262 protein Rleg2_0240 (157 aa).

The protein belongs to the UPF0262 family.

In Rhizobium leguminosarum bv. trifolii (strain WSM2304), this protein is UPF0262 protein Rleg2_0240.